The chain runs to 153 residues: Aspartate carbamoyltransferase regulatory chain (153 aa).

Residues Cys109, Cys114, Cys138, and Cys141 each contribute to the Zn(2+) site.

The protein belongs to the PyrI family. In terms of assembly, contains catalytic and regulatory chains. Zn(2+) is required as a cofactor.

In terms of biological role, involved in allosteric regulation of aspartate carbamoyltransferase. The polypeptide is Aspartate carbamoyltransferase regulatory chain (Salmonella arizonae (strain ATCC BAA-731 / CDC346-86 / RSK2980)).